A 103-amino-acid chain; its full sequence is Small ribosomal subunit protein bS6c (103 aa).

This sequence belongs to the bacterial ribosomal protein bS6 family.

The protein resides in the plastid. The protein localises to the chloroplast. Functionally, binds together with bS18 to 16S ribosomal RNA. The protein is Small ribosomal subunit protein bS6c of Gracilaria tenuistipitata var. liui (Red alga).